Consider the following 114-residue polypeptide: UPF0342 protein SE_1526 (114 aa).

This sequence belongs to the UPF0342 family.

This Staphylococcus epidermidis (strain ATCC 12228 / FDA PCI 1200) protein is UPF0342 protein SE_1526.